Consider the following 338-residue polypeptide: Glycerol-3-phosphate dehydrogenase [NAD(P)+] (338 aa).

Residues serine 14, tyrosine 15, histidine 35, and lysine 109 each contribute to the NADPH site. Residues lysine 109, glycine 138, and threonine 140 each coordinate sn-glycerol 3-phosphate. Alanine 142 provides a ligand contact to NADPH. The sn-glycerol 3-phosphate site is built by lysine 194, aspartate 247, serine 257, arginine 258, and asparagine 259. Residue lysine 194 is the Proton acceptor of the active site. Arginine 258 contributes to the NADPH binding site. NADPH is bound by residues valine 282 and glutamate 284.

Belongs to the NAD-dependent glycerol-3-phosphate dehydrogenase family.

Its subcellular location is the cytoplasm. It catalyses the reaction sn-glycerol 3-phosphate + NAD(+) = dihydroxyacetone phosphate + NADH + H(+). The enzyme catalyses sn-glycerol 3-phosphate + NADP(+) = dihydroxyacetone phosphate + NADPH + H(+). It functions in the pathway membrane lipid metabolism; glycerophospholipid metabolism. Catalyzes the reduction of the glycolytic intermediate dihydroxyacetone phosphate (DHAP) to sn-glycerol 3-phosphate (G3P), the key precursor for phospholipid synthesis. The polypeptide is Glycerol-3-phosphate dehydrogenase [NAD(P)+] (Shewanella baltica (strain OS185)).